The primary structure comprises 213 residues: Probable inactive serine/threonine-protein kinase DDB_G0280559 (213 aa).

In terms of domain architecture, Protein kinase spans 1–211 (MVLRYSYVFK…WNEIVNHSFF (211 aa)).

It belongs to the protein kinase superfamily. Ser/Thr protein kinase family.

The sequence is that of Probable inactive serine/threonine-protein kinase DDB_G0280559 from Dictyostelium discoideum (Social amoeba).